A 327-amino-acid chain; its full sequence is GMP reductase (327 aa).

The active-site Thioimidate intermediate is the Cys-176. Residue 205-228 (IIADGGIRTHGDIAKSIRFGASMV) participates in NADP(+) binding.

It belongs to the IMPDH/GMPR family. GuaC type 2 subfamily.

The enzyme catalyses IMP + NH4(+) + NADP(+) = GMP + NADPH + 2 H(+). Functionally, catalyzes the irreversible NADPH-dependent deamination of GMP to IMP. It functions in the conversion of nucleobase, nucleoside and nucleotide derivatives of G to A nucleotides, and in maintaining the intracellular balance of A and G nucleotides. This is GMP reductase from Streptococcus gordonii (strain Challis / ATCC 35105 / BCRC 15272 / CH1 / DL1 / V288).